Here is a 478-residue protein sequence, read N- to C-terminus: Zinc finger protein 410 (478 aa).

Positions asparagine 187–proline 213 are disordered. C2H2-type zinc fingers lie at residues leucine 219–histidine 243, phenylalanine 249–histidine 273, phenylalanine 279–histidine 303, phenylalanine 309–histidine 333, and histidine 339–histidine 362. Zn(2+) is bound by residues cysteine 221, cysteine 226, histidine 239, histidine 243, cysteine 251, cysteine 256, histidine 269, histidine 273, cysteine 281, cysteine 286, histidine 299, histidine 303, cysteine 311, cysteine 316, histidine 329, histidine 333, cysteine 341, cysteine 344, histidine 357, and histidine 361.

In terms of assembly, interacts with CDKN2A/p14ARF. Sumoylated. Sumoylation increases its half-life, possibly by blocking ubiquitin-mediated degradation. In terms of processing, O-glycosylated. O-GlcNAcylation may occur in response to increasing glucose levels and affect transcription factor activity. Widely expressed.

The protein resides in the nucleus. It is found in the chromosome. In terms of biological role, transcription factor that binds to the sequence motif 5'-CATCCCATAATA-3', and is specifically required to silence expression of fetal hemoglobin in adult erythroid cells. Prevents expression of fetal hemoglobin genes HBG1 and HBG2 through CHD4: acts as a direct transcriptional activator of CHD4, a central component of the NuRD complex that represses transcription of fetal hemoglobin genes HBG1 and HBG2 in erythroid cells. May also activate transcription of matrix-remodeling genes such as MMP1 during fibroblast senescence. May activate transcription of the gap junction gene GJC1, perhaps in response to increasing glucose. However, recent studies suggest that ZNF410 is dedicated to regulate expression of a single gene: CHD4. The chain is Zinc finger protein 410 from Homo sapiens (Human).